The chain runs to 75 residues: Putative membrane protein insertion efficiency factor (75 aa).

The protein belongs to the UPF0161 family.

The protein resides in the cell inner membrane. In terms of biological role, could be involved in insertion of integral membrane proteins into the membrane. This is Putative membrane protein insertion efficiency factor from Gloeothece citriformis (strain PCC 7424) (Cyanothece sp. (strain PCC 7424)).